The following is a 25-amino-acid chain: Histone H1.1 (25 aa).

Positions 1-25 (MVSEAIAALKEREGSSEFAIGKKKE) constitute an H15 domain. Positions 1–25 (MVSEAIAALKEREGSSEFAIGKKKE) are disordered. Residues 9 to 25 (LKEREGSSEFAIGKKKE) are compositionally biased toward basic and acidic residues.

It localises to the nucleus. Its subcellular location is the chromosome. Histones H1 are necessary for the condensation of nucleosome chains into higher-order structures. This Triticum aestivum (Wheat) protein is Histone H1.1.